Consider the following 169-residue polypeptide: Putative phosphoesterase BLi01284/BL02661 (169 aa).

Histidine 34 serves as the catalytic Proton donor. 2 consecutive short sequence motifs (HXTX) follow at residues 34 to 37 (HLTL) and 115 to 118 (HVTV). Histidine 115 acts as the Proton acceptor in catalysis.

Belongs to the 2H phosphoesterase superfamily. YjcG family.

In Bacillus licheniformis (strain ATCC 14580 / DSM 13 / JCM 2505 / CCUG 7422 / NBRC 12200 / NCIMB 9375 / NCTC 10341 / NRRL NRS-1264 / Gibson 46), this protein is Putative phosphoesterase BLi01284/BL02661.